The primary structure comprises 1185 residues: ELMO domain-containing protein F (1185 aa).

Disordered stretches follow at residues 88 to 133 (QPSP…GNNN), 176 to 196 (ISTNPNNNSNNNNNNNNNTAE), 361 to 409 (NNNS…VENE), 566 to 628 (KSTD…NTKS), 642 to 805 (ETER…KSSG), 819 to 868 (LGEK…PYII), 883 to 989 (DLDF…TQVT), and 1044 to 1114 (QKQK…KPVL). Composition is skewed to low complexity over residues 94–127 (STIHNNSSTSINQSSSPSSSSSTTPSSSTQSSPI), 176–194 (ISTNPNNNSNNNNNNNNNT), 361–406 (NNNS…NNNV), and 587–613 (PQSQQQSQQQTQQTQQPASPLQTSSSS). The ELMO domain occupies 275–488 (DRQNVLSFLN…KTRAVLSRIK (214 aa)). A compositionally biased stretch (polar residues) spans 648–665 (SLTGSNGITDGGDSNPNS). Low complexity predominate over residues 688–699 (SENGSSSSFSFE). A compositionally biased stretch (polar residues) spans 721–732 (FNSLTGELTMNI). 2 stretches are compositionally biased toward low complexity: residues 733-760 (SSSSSLEGNQQQQQQQSTNSSTTSPNVS) and 767-780 (TTTTTNTTTATTTT). Positions 781 to 790 (DDQSQQQVPP) are enriched in polar residues. The span at 829–841 (KVKSKKEKKKKSK) shows a compositional bias: basic residues. Low complexity-rich tracts occupy residues 853-864 (NNSANNSSYNNS), 912-974 (SSSN…QQPQ), 1053-1072 (DENQNQNNNNNKLSDNSSNE), and 1096-1109 (GRNSTLNSGSSSLS).

This Dictyostelium discoideum (Social amoeba) protein is ELMO domain-containing protein F (elmoF).